Reading from the N-terminus, the 249-residue chain is NADH dehydrogenase [ubiquinone] flavoprotein 2, mitochondrial (249 aa).

Residues 1-32 (MFFSAALRARAAGLTAHWGRHVRNLHKTAKQN) constitute a mitochondrion transit peptide. K61 carries the post-translational modification N6-acetyllysine. Positions 135, 140, 176, and 180 each coordinate [2Fe-2S] cluster. The residue at position 193 (Y193) is a Phosphotyrosine; by SRC. The segment at 213-249 (IPKPGPRSGRFSCEPAGGLTSLTEPPKGPGFGVQAGL) is disordered.

The protein belongs to the complex I 24 kDa subunit family. In terms of assembly, core subunit of respiratory chain NADH dehydrogenase (Complex I) which is composed of 45 different subunits. This is a component of the flavoprotein-sulfur (FP) fragment of the enzyme. [2Fe-2S] cluster is required as a cofactor.

The protein resides in the mitochondrion inner membrane. The catalysed reaction is a ubiquinone + NADH + 5 H(+)(in) = a ubiquinol + NAD(+) + 4 H(+)(out). Functionally, core subunit of the mitochondrial membrane respiratory chain NADH dehydrogenase (Complex I) which catalyzes electron transfer from NADH through the respiratory chain, using ubiquinone as an electron acceptor. Parts of the peripheral arm of the enzyme, where the electrons from NADH are accepted by flavin mononucleotide (FMN) and then passed along a chain of iron-sulfur clusters by electron tunnelling to the final acceptor ubiquinone. Contains one iron-sulfur cluster. This is NADH dehydrogenase [ubiquinone] flavoprotein 2, mitochondrial from Pan troglodytes (Chimpanzee).